We begin with the raw amino-acid sequence, 323 residues long: MRTATLYRYSVPMEAGVILRHQRLKSRDGLLVKLQQGELSGWGEIAPLPEFSQETLDQAQVAAECWLQHWVSGVESDDSVLPSVAFGLSCAQAELKQTLPLSADYRKAPLCTGDPDELFAVLQALPGEKVAKVKVGLYEAVRDGMIVNVLLEALPDLTLRLDANRSWSRAKADGFAKYVNPALRSRIAFLEEPCKTRAESREFARDTGIAIAWDESVREADFQVEAEPGVAAIVIKPTLVGSLARCQQLVQQAHQAGLVAVISSSIESSLGLTQLARLAAWLTPATVPGLDTLDLMQAQVVRPWPDSPLPLITTEQLGVVWHR.

The active-site Proton donor is the Lys134. Mg(2+)-binding residues include Asp162, Glu191, and Asp214. Residue Lys236 is the Proton acceptor of the active site.

This sequence belongs to the mandelate racemase/muconate lactonizing enzyme family. MenC type 1 subfamily. A divalent metal cation serves as cofactor.

It carries out the reaction (1R,6R)-6-hydroxy-2-succinyl-cyclohexa-2,4-diene-1-carboxylate = 2-succinylbenzoate + H2O. It participates in quinol/quinone metabolism; 1,4-dihydroxy-2-naphthoate biosynthesis; 1,4-dihydroxy-2-naphthoate from chorismate: step 4/7. It functions in the pathway quinol/quinone metabolism; menaquinone biosynthesis. In terms of biological role, converts 2-succinyl-6-hydroxy-2,4-cyclohexadiene-1-carboxylate (SHCHC) to 2-succinylbenzoate (OSB). The chain is o-succinylbenzoate synthase from Yersinia pseudotuberculosis serotype O:3 (strain YPIII).